Consider the following 107-residue polypeptide: MPRKRLTGIVVSDKMDKTVVVAVEKLVQHPLYKKYVKRTKKYHAHDERNECKIGDVVEIEETRPLSKTKRWRVVRIIQRFEPERVVKEKEDIQEEIEAVEGKGGVES.

This sequence belongs to the universal ribosomal protein uS17 family. As to quaternary structure, part of the 30S ribosomal subunit.

In terms of biological role, one of the primary rRNA binding proteins, it binds specifically to the 5'-end of 16S ribosomal RNA. This Thermotoga maritima (strain ATCC 43589 / DSM 3109 / JCM 10099 / NBRC 100826 / MSB8) protein is Small ribosomal subunit protein uS17.